Consider the following 431-residue polypeptide: Adenylosuccinate synthetase (431 aa).

GTP-binding positions include 12 to 18 (GDEGKGK) and 40 to 42 (GHT). Asp13 acts as the Proton acceptor in catalysis. 2 residues coordinate Mg(2+): Asp13 and Gly40. IMP-binding positions include 13–16 (DEGK), 38–41 (NAGH), Thr130, Arg144, Gln225, Thr240, and Arg304. Catalysis depends on His41, which acts as the Proton donor. Position 300–306 (300–306 (STTGRPR)) interacts with substrate. GTP is bound by residues Arg306, 332–334 (KMD), and 414–416 (SIG).

It belongs to the adenylosuccinate synthetase family. In terms of assembly, homodimer. The cofactor is Mg(2+).

The protein resides in the cytoplasm. It carries out the reaction IMP + L-aspartate + GTP = N(6)-(1,2-dicarboxyethyl)-AMP + GDP + phosphate + 2 H(+). Its pathway is purine metabolism; AMP biosynthesis via de novo pathway; AMP from IMP: step 1/2. Plays an important role in the de novo pathway of purine nucleotide biosynthesis. Catalyzes the first committed step in the biosynthesis of AMP from IMP. This is Adenylosuccinate synthetase from Syntrophotalea carbinolica (strain DSM 2380 / NBRC 103641 / GraBd1) (Pelobacter carbinolicus).